A 421-amino-acid chain; its full sequence is Imidazolonepropionase (421 aa).

Fe(3+)-binding residues include His81 and His83. 2 residues coordinate Zn(2+): His81 and His83. 3 residues coordinate 4-imidazolone-5-propanoate: Arg90, Tyr153, and His186. Tyr153 is a binding site for N-formimidoyl-L-glutamate. Residue His251 participates in Fe(3+) binding. His251 provides a ligand contact to Zn(2+). Glu254 is a binding site for 4-imidazolone-5-propanoate. Residue Asp326 coordinates Fe(3+). Position 326 (Asp326) interacts with Zn(2+). N-formimidoyl-L-glutamate is bound by residues Asn328 and Gly330. Ser331 contacts 4-imidazolone-5-propanoate.

It belongs to the metallo-dependent hydrolases superfamily. HutI family. Zn(2+) serves as cofactor. Fe(3+) is required as a cofactor.

The protein localises to the cytoplasm. The enzyme catalyses 4-imidazolone-5-propanoate + H2O = N-formimidoyl-L-glutamate. Its pathway is amino-acid degradation; L-histidine degradation into L-glutamate; N-formimidoyl-L-glutamate from L-histidine: step 3/3. Functionally, catalyzes the hydrolytic cleavage of the carbon-nitrogen bond in imidazolone-5-propanoate to yield N-formimidoyl-L-glutamate. It is the third step in the universal histidine degradation pathway. In Streptococcus pyogenes serotype M2 (strain MGAS10270), this protein is Imidazolonepropionase.